The primary structure comprises 466 residues: Argininosuccinate lyase (466 aa).

Belongs to the lyase 1 family. Argininosuccinate lyase subfamily.

Its subcellular location is the cytoplasm. The catalysed reaction is 2-(N(omega)-L-arginino)succinate = fumarate + L-arginine. It participates in amino-acid biosynthesis; L-arginine biosynthesis; L-arginine from L-ornithine and carbamoyl phosphate: step 3/3. This chain is Argininosuccinate lyase, found in Synechococcus elongatus (strain ATCC 33912 / PCC 7942 / FACHB-805) (Anacystis nidulans R2).